Reading from the N-terminus, the 255-residue chain is uncharacterized protein (255 aa).

Positions 1–23 (MKRLNKLVLGIIFLFLVISITAG) are cleaved as a signal peptide. The N-palmitoyl cysteine moiety is linked to residue C24. The S-diacylglycerol cysteine moiety is linked to residue C24.

It belongs to the staphylococcal tandem lipoprotein family.

It localises to the cell membrane. This is an uncharacterized protein from Staphylococcus aureus (strain USA300).